A 181-amino-acid polypeptide reads, in one-letter code: NAD(P)H-quinone oxidoreductase subunit I, chloroplastic (181 aa).

2 consecutive 4Fe-4S ferredoxin-type domains span residues 55–84 and 95–124; these read GRIH…VDWE and KSYS…MTEE. Cys-64, Cys-67, Cys-70, Cys-74, Cys-104, Cys-107, Cys-110, and Cys-114 together coordinate [4Fe-4S] cluster.

It belongs to the complex I 23 kDa subunit family. As to quaternary structure, NDH is composed of at least 16 different subunits, 5 of which are encoded in the nucleus. Requires [4Fe-4S] cluster as cofactor.

It is found in the plastid. The protein resides in the chloroplast thylakoid membrane. The enzyme catalyses a plastoquinone + NADH + (n+1) H(+)(in) = a plastoquinol + NAD(+) + n H(+)(out). The catalysed reaction is a plastoquinone + NADPH + (n+1) H(+)(in) = a plastoquinol + NADP(+) + n H(+)(out). In terms of biological role, NDH shuttles electrons from NAD(P)H:plastoquinone, via FMN and iron-sulfur (Fe-S) centers, to quinones in the photosynthetic chain and possibly in a chloroplast respiratory chain. The immediate electron acceptor for the enzyme in this species is believed to be plastoquinone. Couples the redox reaction to proton translocation, and thus conserves the redox energy in a proton gradient. In Physcomitrium patens (Spreading-leaved earth moss), this protein is NAD(P)H-quinone oxidoreductase subunit I, chloroplastic.